Here is a 245-residue protein sequence, read N- to C-terminus: MSQSTSVLRRNGFTFKQFFVAHDRCAMKVGTDGILLGAWAPVAGVKRCLDIGAGSGLLALMLAQRTSDSVIIDAVELESEAAAQAQENINQSPWAERINVHTADIQQWLTQQTVRFDLIISNPPYYQQGVECATPQREQARYTTTLDHPSLLTCAAECITEEGFFCVVLPEQVGNGFTELALSMGWHLRLRTDVAENEARLPHRVLLAFSPQAGECFSDRLVIRGPDQNYSEAYTALTQAFYLFM.

Belongs to the methyltransferase superfamily. tRNA (adenine-N(6)-)-methyltransferase family.

Its subcellular location is the cytoplasm. The catalysed reaction is adenosine(37) in tRNA1(Val) + S-adenosyl-L-methionine = N(6)-methyladenosine(37) in tRNA1(Val) + S-adenosyl-L-homocysteine + H(+). In terms of biological role, specifically methylates the adenine in position 37 of tRNA(1)(Val) (anticodon cmo5UAC). The chain is tRNA1(Val) (adenine(37)-N6)-methyltransferase from Shigella sonnei (strain Ss046).